A 273-amino-acid chain; its full sequence is Dermonecrotic toxin LhSicTox-alphaIA2aviii (273 aa).

His-5 is a catalytic residue. Mg(2+) contacts are provided by Glu-25 and Asp-27. The active-site Nucleophile is the His-41. Cystine bridges form between Cys-45/Cys-51 and Cys-47/Cys-190. Mg(2+) is bound at residue Asp-85.

The protein belongs to the arthropod phospholipase D family. Class II subfamily. It depends on Mg(2+) as a cofactor. Expressed by the venom gland.

It is found in the secreted. It catalyses the reaction an N-(acyl)-sphingosylphosphocholine = an N-(acyl)-sphingosyl-1,3-cyclic phosphate + choline. It carries out the reaction an N-(acyl)-sphingosylphosphoethanolamine = an N-(acyl)-sphingosyl-1,3-cyclic phosphate + ethanolamine. The enzyme catalyses a 1-acyl-sn-glycero-3-phosphocholine = a 1-acyl-sn-glycero-2,3-cyclic phosphate + choline. The catalysed reaction is a 1-acyl-sn-glycero-3-phosphoethanolamine = a 1-acyl-sn-glycero-2,3-cyclic phosphate + ethanolamine. Dermonecrotic toxins cleave the phosphodiester linkage between the phosphate and headgroup of certain phospholipids (sphingolipid and lysolipid substrates), forming an alcohol (often choline) and a cyclic phosphate. This toxin acts on sphingomyelin (SM). It may also act on ceramide phosphoethanolamine (CPE), lysophosphatidylcholine (LPC) and lysophosphatidylethanolamine (LPE), but not on lysophosphatidylserine (LPS), and lysophosphatidylglycerol (LPG). It acts by transphosphatidylation, releasing exclusively cyclic phosphate products as second products. Induces dermonecrosis, hemolysis, increased vascular permeability, edema, inflammatory response, and platelet aggregation. This chain is Dermonecrotic toxin LhSicTox-alphaIA2aviii, found in Loxosceles hirsuta (Recluse spider).